The chain runs to 505 residues: E3 SUMO-protein ligase PIAS4-A (505 aa).

The region spanning 12–46 (VKSFRVSDLQTLLASMGRSKSGLKQDLVGRALRLV) is the SAP domain. Positions 20-24 (LQTLL) match the LXXLL motif motif. K35 is covalently cross-linked (Glycyl lysine isopeptide (Lys-Gly) (interchain with G-Cter in SUMO); alternate). K35 participates in a covalent cross-link: Glycyl lysine isopeptide (Lys-Gly) (interchain with G-Cter in SUMO2); alternate. Glycyl lysine isopeptide (Lys-Gly) (interchain with G-Cter in SUMO2) cross-links involve residues K56 and K68. Residues 104–264 (GIPKPAPPPA…SVAVYLVRVF (161 aa)) enclose the PINIT domain. The SP-RING-type zinc-finger motif lies at 296–381 (PESEIATTGL…LKETPEDVEE (86 aa)). C327, H329, C350, and C353 together coordinate Zn(2+). The segment at 374–505 (ETPEDVEEIE…DYDKDLVTAY (132 aa)) is required for nuclear localization. Residues 395–407 (DDKEKERERENSR) show a composition bias toward basic and acidic residues. The segment at 395 to 505 (DDKEKERERE…DYDKDLVTAY (111 aa)) is disordered. The segment covering 437 to 457 (SGSGGASAGTGSTSGGSGGGT) has biased composition (gly residues). Acidic residues predominate over residues 462–485 (TLDDSSEEEGGGGAEDSEETDDSQ). The span at 493 to 505 (GRYDYDKDLVTAY) shows a compositional bias: basic and acidic residues.

The protein belongs to the PIAS family. Post-translationally, sumoylated. Lys-35 is the main site of sumoylation. In terms of tissue distribution, highly expressed in spleen, liver, and brain. Expressed at lower levels in heart, intestine, kidney, gill, skin, and muscle.

It localises to the nucleus. It catalyses the reaction S-ubiquitinyl-[E2 ubiquitin-conjugating enzyme]-L-cysteine + [acceptor protein]-L-lysine = [E2 ubiquitin-conjugating enzyme]-L-cysteine + N(6)-ubiquitinyl-[acceptor protein]-L-lysine.. The protein operates within protein modification; protein sumoylation. In terms of biological role, functions as an E3-type small ubiquitin-like modifier (SUMO) ligase. May play a role as a transcriptional coregulator in various cellular pathways. Catalyzes conjugation of SUMO2 to KAT5 in response to DNA damage, facilitating repair of DNA double-strand breaks (DSBs) via homologous recombination (HR). Mediates sumoylation of PARP1 in response to PARP1 trapping to chromatin. Negatively regulates induction of interferon phi 1 (ifnphi1) mediated by mavs and ticam1/trif. Also inhibits ifnphi1-mediated activation of the interferon-stimulated genes (ISGs) pkz and cd40, and to a lesser extent rsad2 and isg15. May inhibit ticam1/trif-mediated activation of NF-kappa-B. This Danio rerio (Zebrafish) protein is E3 SUMO-protein ligase PIAS4-A.